We begin with the raw amino-acid sequence, 354 residues long: Methionine import ATP-binding protein MetN (354 aa).

Residues 8–250 (LDHIDITFHQ…PREDLTKDFI (243 aa)) form the ABC transporter domain. ATP is bound at residue 42 to 49 (GYSGAGKS).

This sequence belongs to the ABC transporter superfamily. Methionine importer (TC 3.A.1.24) family. As to quaternary structure, the complex is composed of two ATP-binding proteins (MetN), two transmembrane proteins (MetI) and a solute-binding protein (MetQ).

It localises to the cell membrane. The enzyme catalyses L-methionine(out) + ATP + H2O = L-methionine(in) + ADP + phosphate + H(+). It catalyses the reaction D-methionine(out) + ATP + H2O = D-methionine(in) + ADP + phosphate + H(+). Functionally, part of the ABC transporter complex MetNIQ involved in methionine import. Responsible for energy coupling to the transport system. In Streptococcus mutans serotype c (strain ATCC 700610 / UA159), this protein is Methionine import ATP-binding protein MetN.